Reading from the N-terminus, the 619-residue chain is E3 ubiquitin-protein ligase complex SLX5-SLX8 subunit SLX5 (619 aa).

Residues 1 to 23 (MHSDTNGRTKSNNSPSDNNPNET) form a disordered region. The span at 11-21 (SNNSPSDNNPN) shows a compositional bias: low complexity. Phosphoserine is present on residues S14 and S29. A disordered region spans residues 63 to 90 (VRSDSRSRNSQRTHITASSERPDFQANN). Polar residues predominate over residues 70 to 90 (RNSQRTHITASSERPDFQANN). The tract at residues 201–335 (SRRQLLRRSA…ALFTEFRNQL (135 aa)) is EUC1 interaction domain.

As to quaternary structure, component of the heterodimeric SUMO-targeted ubiquitin ligase (STUbL) complex composed of SLX5 and SLX8. Interacts with sirtuin SIR2. Interacts with KAR9. Interacts with EUC1.

Its subcellular location is the nucleus. It is found in the chromosome. The protein resides in the centromere. It localises to the kinetochore. The catalysed reaction is S-ubiquitinyl-[E2 ubiquitin-conjugating enzyme]-L-cysteine + [acceptor protein]-L-lysine = [E2 ubiquitin-conjugating enzyme]-L-cysteine + N(6)-ubiquitinyl-[acceptor protein]-L-lysine.. Its pathway is protein modification; protein ubiquitination. Component of the SUMO-targeted ubiquitin ligase (STUbL) complex SLX5/SLX8 that mediates ubiquitination and subsequent desumoylation of sumoylated proteins and proteins containing SUMO-like domains for their degradation. The STUbL complex SLX5/SLX8 stimulates ubiquitin conjugating enzymes, including UBC1, UBC4, UBC5 and UBC13-MMS2, and mediates the proteolytic down-regulation of sumoylated proteins. The STUbL complex SLX5/SLX8 is involved in ubiquitin-mediated degradation of histone variant CSE4, preventing mislocalization to euchromatin. The complex plays an essential role in maintenance of chromosome stability and links SUMO-dependent ubiquitination to a centromere-specific function during mitosis. The complex is involved in proteolysis of spindle positioning protein KAR9 and ensures correct spindle function by regulating levels of microtubule-associated proteins. During replication, the complex helps prevent DNA lesions via recombination and has a role in localizing the DNA damage protein DCD2. The complex especially ubiquitinates the nuclease YEN1 and prevents persistent accumulation of a fraction of YEN1 associated with sites of activity in late G2/M and helps maintain the balance between pro- and anti-crossover pathways during homologous recombination. It is also involved in ubiquitin-mediated degradation of DNA repair proteins RAD52 and RAD57. Along with SIR2, promotes silencing of genes at telomeric or ribosomal DNA (rDNA) loci. Finally, the complex is recruited to distinct genomic hotspots of non-H2B protein ubiquitination (ub-hotspots) by the sumoylated transcription factor-like protein EUC1 where it ubiquitinates EUC1 and presumably other targets. This is E3 ubiquitin-protein ligase complex SLX5-SLX8 subunit SLX5 (SLX5) from Saccharomyces cerevisiae (strain ATCC 204508 / S288c) (Baker's yeast).